We begin with the raw amino-acid sequence, 645 residues long: Minor extracellular protease Epr (645 aa).

Positions 1-27 (MKNMSCKLVVSVTLFFSFLTIGPLAHA) are cleaved as a signal peptide. Residues 28–103 (QNSSEKEVIV…AADSTDFKVL (76 aa)) constitute a propeptide that is removed on maturation. The Peptidase S8 domain occupies 115–382 (QWNLEPIQVK…YGLIQYKAQA (268 aa)). Catalysis depends on charge relay system residues aspartate 142, histidine 172, and serine 326. 2 disordered regions span residues 490–577 (KQAK…KTAL) and 591–645 (AEAK…KPKK). Basic and acidic residues predominate over residues 491–508 (QAKDKVAKAEKSKKKTDV). The segment covering 522–547 (SEKTSLQKRLNKVKSTNLKTAQQSVS) has biased composition (polar residues). Basic and acidic residues predominate over residues 592–610 (EAKKVETAKAKVKKAEKDK).

It belongs to the peptidase S8 family. May undergo two steps of processing in its passage through the cell membrane: removal of the N-terminal signal sequence and cleavage of the C-terminal domain. Several active forms of Epr with molecular masses between 40 and 34 kDa were found in the medium of B.subtilis cultures. The size variation of the active forms expressed by the complete epr gene appears to be the result of partial removal of the C-terminus either by processing or degradation.

The protein resides in the secreted. It localises to the cell wall. With respect to regulation, requires Ca(2+) for stability. Activity is inhibited by phenylmethylsulfonyl fluoride (PMSF) and EDTA. In terms of biological role, serine protease. Involved in the production of the competence and sporulation stimulating factor CSF. In addition, is essential for swarming motility. Plays a key role in DegU-mediated swarming motility. The protease activity is dispensable for swarming. Not essential for growth or sporulation. The polypeptide is Minor extracellular protease Epr (Bacillus subtilis (strain 168)).